The following is a 244-amino-acid chain: Cysteine-rich secretory protein 1 (244 aa).

Positions 1–19 are cleaved as a signal peptide; sequence MALMLVLFFLAAVLPPSLL. The region spanning 44 to 170 is the SCP domain; the sequence is SKHNQLRRMV…PLRYYYVCHY (127 aa). N-linked (GlcNAc...) asparagine glycosylation is present at asparagine 145. Cystine bridges form between cysteine 190-cysteine 197, cysteine 193-cysteine 202, cysteine 206-cysteine 239, cysteine 215-cysteine 233, and cysteine 224-cysteine 237. Residues 206–239 enclose the ShKT domain; it reads CGHEDKYTNCKYLKKMLSCEHELLKKGCKATCLC.

The protein belongs to the CRISP family. Mainly found in the cauda epididymis where it is synthesized by the principal cells and secreted into the lumen. Binds to the heads of spermatozoa. Also expressed in the submandibular gland.

Its subcellular location is the cytoplasmic vesicle. It is found in the secretory vesicle. This protein is supposed to help spermatozoa undergo functional maturation while they move from the testis to the ductus deferens. This Mus musculus (Mouse) protein is Cysteine-rich secretory protein 1 (Crisp1).